The primary structure comprises 282 residues: Glycine/sarcosine N-methyltransferase (282 aa).

The segment covering 1-23 (MTSTQNHPLQTQDDQQRFGQSPE) has biased composition (polar residues). The interval 1–27 (MTSTQNHPLQTQDDQQRFGQSPESVRE) is disordered. Residues tyrosine 35, tryptophan 43, arginine 52, alanine 76, aspartate 97, 123-124 (DW), and leucine 141 each bind S-adenosyl-L-methionine. The substrate site is built by asparagine 143, arginine 176, and tyrosine 217.

This sequence belongs to the class I-like SAM-binding methyltransferase superfamily. Glycine N-methyltransferase family. In terms of assembly, monomer.

The catalysed reaction is glycine + 2 S-adenosyl-L-methionine = N,N-dimethylglycine + 2 S-adenosyl-L-homocysteine + 2 H(+). The enzyme catalyses glycine + S-adenosyl-L-methionine = sarcosine + S-adenosyl-L-homocysteine + H(+). It carries out the reaction sarcosine + S-adenosyl-L-methionine = N,N-dimethylglycine + S-adenosyl-L-homocysteine + H(+). It functions in the pathway amine and polyamine biosynthesis; betaine biosynthesis via glycine pathway; betaine from glycine: step 1/3. Its pathway is amine and polyamine biosynthesis; betaine biosynthesis via glycine pathway; betaine from glycine: step 2/3. In terms of biological role, catalyzes the methylation of glycine and sarcosine to sarcosine and dimethylglycine, respectively, with S-adenosylmethionine (AdoMet) acting as the methyl donor. It has strict specificity for glycine and sarcosine as the methyl group acceptors. The sequence is that of Glycine/sarcosine N-methyltransferase from Parasynechococcus marenigrum (strain WH8102).